Reading from the N-terminus, the 318-residue chain is MNTTPDTALLVVNLGTPESPTAPAVRRYLAEFLSDRRVVAIPPLFWKPLLYGVILPIRGPKSAEKYAKVWLPEGSPLAVYTRRLAGGLQAVMPDWHVEWAMRYGEPALRKTLDRLRARGIKRIVVLPLYPQYSTTTTASIQDVVDAWRTSAPEIAVEVIQDYCEDTGWVAAIAESIRAHWQVHGRSEKLMFSFHGLPQRVADAGDPYPQQCERSAQAIVAALGLGADEWQMGYQSRFGAERWLQPYAEPTLWKLAEGGVRSFDLVCPGFATDCLETLEEVALGFSETLAERGATLSYIPCLNASDAHAHALAAMARRA.

Fe cation contacts are provided by histidine 194 and glutamate 275.

It belongs to the ferrochelatase family.

Its subcellular location is the cytoplasm. The catalysed reaction is heme b + 2 H(+) = protoporphyrin IX + Fe(2+). The protein operates within porphyrin-containing compound metabolism; protoheme biosynthesis; protoheme from protoporphyrin-IX: step 1/1. Functionally, catalyzes the ferrous insertion into protoporphyrin IX. The protein is Ferrochelatase of Xanthomonas axonopodis pv. citri (strain 306).